Reading from the N-terminus, the 75-residue chain is U-stichotoxin-Hau3a (75 aa).

The first 19 residues, 1 to 19, serve as a signal peptide directing secretion; sequence MNHLIILVVAAVFLGMASA. Positions 20 to 26 are excised as a propeptide; sequence EDVFHKR. 3 cysteine pairs are disulfide-bonded: Cys-31–Cys-71, Cys-33–Cys-61, and Cys-54–Cys-72.

It belongs to the sea anemone sodium channel inhibitory toxin family. Type I subfamily. In terms of processing, contains 3 disulfide bonds.

The protein localises to the secreted. It is found in the nematocyst. Its function is as follows. Toxin that is lethal to crab. This Heteractis aurora (Banded sea anemone) protein is U-stichotoxin-Hau3a.